The chain runs to 1905 residues: Alpha-2-macroglobulin (1905 aa).

The signal sequence occupies residues 1-21 (MNKQYFLSLFSTLAVALTLSG). The N-palmitoyl cysteine moiety is linked to residue C22. Residue C22 is the site of S-diacylglycerol cysteine attachment. A cross-link (isoglutamyl cysteine thioester (Cys-Gln)) is located at residues 1438–1441 (CTEQ).

It belongs to the protease inhibitor I39 (alpha-2-macroglobulin) family. Bacterial alpha-2-macroglobulin subfamily.

It is found in the cell membrane. Its function is as follows. Protects the bacterial cell from host peptidases. This Pasteurella multocida (strain Pm70) protein is Alpha-2-macroglobulin.